Here is a 666-residue protein sequence, read N- to C-terminus: ATP-dependent zinc metalloprotease FtsH (666 aa).

The Cytoplasmic portion of the chain corresponds to 1–6 (MKSETG). Residues 7-27 (YMGFVVVLVFMVLLALQLATL) form a helical membrane-spanning segment. Residues 28–116 (SAPATQIAYS…TRYRGADDDT (89 aa)) lie on the Periplasmic side of the membrane. The chain crosses the membrane as a helical span at residues 117-137 (WIGTLASWIVPIAVFALVWNL). Residues 138–666 (MLRRPRGGLQ…ADNADHSVPQ (529 aa)) lie on the Cytoplasmic side of the membrane. 210 to 217 (GAPGTGKT) serves as a coordination point for ATP. Histidine 432 lines the Zn(2+) pocket. Glutamate 433 is a catalytic residue. Positions 436 and 509 each coordinate Zn(2+). Residues 612-666 (NDEPTPEPGARDPGGDAAKRSGIGAAPAKPPAEVGSAELRDPARKADNADHSVPQ) form a disordered region. Composition is skewed to basic and acidic residues over residues 620–630 (GARDPGGDAAK) and 649–666 (ELRDPARKADNADHSVPQ).

It in the central section; belongs to the AAA ATPase family. This sequence in the C-terminal section; belongs to the peptidase M41 family. In terms of assembly, homohexamer. Zn(2+) serves as cofactor.

It is found in the cell inner membrane. In terms of biological role, acts as a processive, ATP-dependent zinc metallopeptidase for both cytoplasmic and membrane proteins. Plays a role in the quality control of integral membrane proteins. This chain is ATP-dependent zinc metalloprotease FtsH, found in Burkholderia pseudomallei (strain 1710b).